A 195-amino-acid polypeptide reads, in one-letter code: METIVLGVEPRVIKKNEAEKLRKSGLVPAVVYHKGEETVAVSIQELALTKLVHSAESHIIDLQFPDGKLKRSFIKEVQFHPVTDRIIHADFQLFSADEIVEMVVPVSVSGESVGVEKGGKLQIIMHSLTLKGKPTDMPEHFVIDITALDLAHSIHVREIPMTNYPGLTIMDEPDAPVITVLATRKEVEAAAEVAS.

It belongs to the bacterial ribosomal protein bL25 family. CTC subfamily. As to quaternary structure, part of the 50S ribosomal subunit; part of the 5S rRNA/L5/L18/L25 subcomplex. Contacts the 5S rRNA. Binds to the 5S rRNA independently of L5 and L18.

Functionally, this is one of the proteins that binds to the 5S RNA in the ribosome where it forms part of the central protuberance. The protein is Large ribosomal subunit protein bL25 of Chlorobium chlorochromatii (strain CaD3).